The following is a 601-amino-acid chain: MAGAAGPGTVPGAAGGDGDDSLYPIAVLIDELRNEDVQLRLNSIKKLSTIALALGVERTRTELLPFLTDTIYDEDEVLLALAEQLGNFTGLVGGPDFAHCLLPPLESLATVEETVVRDKAVESLRQISQEHTPVALEAHFVPLVKRLASGDWFTSRTSACGLFSVCYPRASNAVKAEIRQHFRSLCSDDTPMVRRAAASKLGEFAKVLELDSVKTEIVPLFTNLASDEQDSVRLLAVEACVSIAQLLSQDDLEALVMPTLRQAAEDKSWRVRYMVADKFSELQKAVGPKIALSDLIPAFQSLLRDCEAEVRAAAAHKVRELCENLPTEGRETVIMNQILPYIKELVSDTNQHVKSALASVIMGLSTVLGKENTIEHLLPLFLAQLKDECPEVRLNIISNLDCVNEVIGIRQLSQSLLPAIVELAEDAKWRVRLAIIEYMPLLAGQLGVEFFDEKLNSLCMAWLVDHVYAIREAATNNLMKLVQKFGTEWAQNTIVPKVLVMANDPNYLHRMTTLFCINALSEACGKEITTKQMLPIVLKMAGDQVANVRFNVAKSLQKIGPILDTNALQGEVKPVLQKLGQDEDMDVKYFAQEAISVLALA.

A2 bears the N-acetylalanine mark. HEAT repeat units lie at residues 20 to 58, 59 to 96, 97 to 135, 136 to 173, 174 to 212, 213 to 251, 252 to 290, 291 to 333, 334 to 372, 373 to 411, 412 to 450, 451 to 489, 490 to 528, 529 to 567, and 568 to 601; these read DSLYPIAVLIDELRNEDVQLRLNSIKKLSTIALALGVER, TRTELLPFLTDTIYDEDEVLLALAEQLGNFTGLVGGPD, FAHCLLPPLESLATVEETVVRDKAVESLRQISQEHTPVA, LEAHFVPLVKRLASGDWFTSRTSACGLFSVCYPRASNA, VKAEIRQHFRSLCSDDTPMVRRAAASKLGEFAKVLELDS, VKTEIVPLFTNLASDEQDSVRLLAVEACVSIAQLLSQDD, LEALVMPTLRQAAEDKSWRVRYMVADKFSELQKAVGPKI, ALSD…RETV, IMNQILPYIKELVSDTNQHVKSALASVIMGLSTVLGKEN, TIEHLLPLFLAQLKDECPEVRLNIISNLDCVNEVIGIRQ, LSQSLLPAIVELAEDAKWRVRLAIIEYMPLLAGQLGVEF, FDEKLNSLCMAWLVDHVYAIREAATNNLMKLVQKFGTEW, AQNTIVPKVLVMANDPNYLHRMTTLFCINALSEACGKEI, TTKQMLPIVLKMAGDQVANVRFNVAKSLQKIGPILDTNA, and LQGEVKPVLQKLGQDEDMDVKYFAQEAISVLALA.

Belongs to the phosphatase 2A regulatory subunit A family. PP2A consists of a common heterodimeric core enzyme, composed of a 36 kDa catalytic subunit (subunit C) and a 65 kDa constant regulatory subunit (PR65 or subunit A), that associates with a variety of regulatory subunits. Proteins that associate with the core dimer include three families of regulatory subunits B (the R2/B/PR55/B55, R3/B''/PR72/PR130/PR59 and R5/B'/B56 families), the 48 kDa variable regulatory subunit, viral proteins, and cell signaling molecules. Interacts with IPO9. Interacts with SGO1. Interacts with RAF1.

The PR65 subunit of protein phosphatase 2A serves as a scaffolding molecule to coordinate the assembly of the catalytic subunit and a variable regulatory B subunit. This is Serine/threonine-protein phosphatase 2A 65 kDa regulatory subunit A beta isoform (Ppp2r1b) from Rattus norvegicus (Rat).